Here is a 312-residue protein sequence, read N- to C-terminus: Glyoxylate/hydroxypyruvate reductase A (312 aa).

Residue Arg-227 is part of the active site. The Proton donor role is filled by His-275.

The protein belongs to the D-isomer specific 2-hydroxyacid dehydrogenase family. GhrA subfamily.

It localises to the cytoplasm. It catalyses the reaction glycolate + NADP(+) = glyoxylate + NADPH + H(+). The enzyme catalyses (R)-glycerate + NAD(+) = 3-hydroxypyruvate + NADH + H(+). It carries out the reaction (R)-glycerate + NADP(+) = 3-hydroxypyruvate + NADPH + H(+). Functionally, catalyzes the NADPH-dependent reduction of glyoxylate and hydroxypyruvate into glycolate and glycerate, respectively. This is Glyoxylate/hydroxypyruvate reductase A from Salmonella paratyphi B (strain ATCC BAA-1250 / SPB7).